The primary structure comprises 132 residues: Small ribosomal subunit protein uS8 (132 aa).

This sequence belongs to the universal ribosomal protein uS8 family. Part of the 30S ribosomal subunit. Contacts proteins S5 and S12.

One of the primary rRNA binding proteins, it binds directly to 16S rRNA central domain where it helps coordinate assembly of the platform of the 30S subunit. This is Small ribosomal subunit protein uS8 from Parvibaculum lavamentivorans (strain DS-1 / DSM 13023 / NCIMB 13966).